The sequence spans 173 residues: Photosystem I assembly protein Ycf3 (173 aa).

3 TPR repeats span residues 35-68 (AFSYYRDGMSAQSEGEYAEALENYYEALKLEEDP), 72-105 (SYILYNIGLIYASNGEYIKALEYYHQGLELNFKL), and 120-153 (GVQAVEEKNIELSKLMFDKAAQYWQQAIKLAPDN).

It belongs to the Ycf3 family.

It is found in the plastid. It localises to the chloroplast thylakoid membrane. In terms of biological role, essential for the assembly of the photosystem I (PSI) complex. May act as a chaperone-like factor to guide the assembly of the PSI subunits. The polypeptide is Photosystem I assembly protein Ycf3 (Porphyra purpurea (Red seaweed)).